Here is a 330-residue protein sequence, read N- to C-terminus: ADP-L-glycero-D-manno-heptose-6-epimerase (330 aa).

NADP(+) contacts are provided by residues 11–12 (FI), 32–33 (DN), K39, K54, 75–79 (EGACS), and N92. Y139 serves as the catalytic Proton acceptor. K143 is an NADP(+) binding site. N168 provides a ligand contact to substrate. Residues V169 and K177 each contribute to the NADP(+) site. The Proton acceptor role is filled by K177. Substrate-binding positions include R179, H186, 200-203 (FGEY), R213, and Y292.

The protein belongs to the NAD(P)-dependent epimerase/dehydratase family. HldD subfamily. Homopentamer. The cofactor is NADP(+).

The enzyme catalyses ADP-D-glycero-beta-D-manno-heptose = ADP-L-glycero-beta-D-manno-heptose. It participates in nucleotide-sugar biosynthesis; ADP-L-glycero-beta-D-manno-heptose biosynthesis; ADP-L-glycero-beta-D-manno-heptose from D-glycero-beta-D-manno-heptose 7-phosphate: step 4/4. Functionally, catalyzes the interconversion between ADP-D-glycero-beta-D-manno-heptose and ADP-L-glycero-beta-D-manno-heptose via an epimerization at carbon 6 of the heptose. The chain is ADP-L-glycero-D-manno-heptose-6-epimerase from Burkholderia ambifaria (strain MC40-6).